A 289-amino-acid polypeptide reads, in one-letter code: ATP synthase gamma chain (289 aa).

This sequence belongs to the ATPase gamma chain family. In terms of assembly, F-type ATPases have 2 components, CF(1) - the catalytic core - and CF(0) - the membrane proton channel. CF(1) has five subunits: alpha(3), beta(3), gamma(1), delta(1), epsilon(1). CF(0) has three main subunits: a, b and c.

The protein localises to the cell inner membrane. In terms of biological role, produces ATP from ADP in the presence of a proton gradient across the membrane. The gamma chain is believed to be important in regulating ATPase activity and the flow of protons through the CF(0) complex. This is ATP synthase gamma chain from Azoarcus sp. (strain BH72).